The chain runs to 778 residues: Endonuclease MutS2 (778 aa).

ATP is bound at residue 328 to 335 (GPNTGGKT). Residues 702 to 777 (LDLRGKRYEE…GSGATIVTFK (76 aa)) enclose the Smr domain.

It belongs to the DNA mismatch repair MutS family. MutS2 subfamily. As to quaternary structure, homodimer. Binds to stalled ribosomes, contacting rRNA.

In terms of biological role, endonuclease that is involved in the suppression of homologous recombination and thus may have a key role in the control of bacterial genetic diversity. Functionally, acts as a ribosome collision sensor, splitting the ribosome into its 2 subunits. Detects stalled/collided 70S ribosomes which it binds and splits by an ATP-hydrolysis driven conformational change. Acts upstream of the ribosome quality control system (RQC), a ribosome-associated complex that mediates the extraction of incompletely synthesized nascent chains from stalled ribosomes and their subsequent degradation. Probably generates substrates for RQC. The chain is Endonuclease MutS2 from Streptococcus pneumoniae (strain 70585).